The following is a 1997-amino-acid chain: Protein MOR1 (1997 aa).

HEAT repeat units lie at residues 48 to 86 and 164 to 202; these read DARL…AADA and VVPP…WIGK. The interval 236–264 is disordered; sequence RKIRSEQEKELEEEVVPEAAGTNNSEEAV. 3 HEAT repeats span residues 321-359, 362-400, and 441-479; these read PGDF…GLRT, SGNS…SGCI, and LKLH…MVGM. The tract at residues 501–576 is disordered; that stretch reads IGSASDTTSG…DGGPQSKASA (76 aa). Residues 504–520 show a composition bias toward polar residues; the sequence is ASDTTSGTVAASNTGVG. Positions 529–539 are enriched in low complexity; it reads SSSMRRSAASM. 4 HEAT repeats span residues 848 to 886, 890 to 928, 931 to 969, and 1007 to 1045; these read EDIS…EAHK, PTGT…AMGP, EKSS…AAQL, and PSEA…ICGQ. A disordered region spans residues 1087–1115; it reads MSLPSKAGSKNNKHGPNDRGSNVSKAVSQ. 4 HEAT repeats span residues 1233–1259, 1260–1294, 1295–1332, and 1334–1372; these read TTCL…MLTE, AEAA…MVNI, YSLP…HHGT, and VSGL…NLGD. Residues 1400-1410 are compositionally biased toward basic and acidic residues; sequence MDKRREGRPGD. The tract at residues 1400–1436 is disordered; sequence MDKRREGRPGDARAALRRSVRENGSDIAEQSGEAVSR. An HEAT 14 repeat occupies 1539–1579; it reads RSCKYVLNTLMQTFQIKRLAHAVKEGTLDNLITELLLWLLD. Residues 1755–1776 form a disordered region; the sequence is MGQTHWGDAGSNNPNPSTHSTD. Over residues 1764–1776 the composition is skewed to polar residues; that stretch reads GSNNPNPSTHSTD.

The protein belongs to the TOG/XMAP215 family.

It localises to the cytoplasm. The protein localises to the cytoskeleton. Functionally, microtubule-associated protein that is essential for cortical microtubules organization and function. The polypeptide is Protein MOR1 (MOR1) (Oryza sativa subsp. japonica (Rice)).